Consider the following 263-residue polypeptide: Undecaprenyl-diphosphatase 2 (263 aa).

The next 8 membrane-spanning stretches (helical) occupy residues 15-37, 42-62, 79-99, 107-127, 142-162, 183-203, 216-236, and 242-262; these read GLTEFLPVSSTGHMILTGHLIGF, AKVFEVVIQLGSILAVVVIFW, SLNLLHIIIGMIPAGVLGVLF, LFGPGPVVISLVAGGILMIVA, ITYKQAFTIGMFQCLALWPGF, AEYTFILAVPMMVAASGLDLI, LFVTGFVTAFVVAMLAIVSFL, and VKLTPFAYYRFILAAVFYFFI.

The protein belongs to the UppP family.

The protein localises to the cell membrane. The enzyme catalyses di-trans,octa-cis-undecaprenyl diphosphate + H2O = di-trans,octa-cis-undecaprenyl phosphate + phosphate + H(+). In terms of biological role, catalyzes the dephosphorylation of undecaprenyl diphosphate (UPP). Confers resistance to bacitracin. The protein is Undecaprenyl-diphosphatase 2 of Bacillus cereus (strain ATCC 14579 / DSM 31 / CCUG 7414 / JCM 2152 / NBRC 15305 / NCIMB 9373 / NCTC 2599 / NRRL B-3711).